We begin with the raw amino-acid sequence, 366 residues long: 2-aminoethylphosphonate--pyruvate transaminase (366 aa).

At lysine 192 the chain carries N6-(pyridoxal phosphate)lysine.

The protein belongs to the class-V pyridoxal-phosphate-dependent aminotransferase family. PhnW subfamily. In terms of assembly, homodimer. Pyridoxal 5'-phosphate is required as a cofactor.

It carries out the reaction (2-aminoethyl)phosphonate + pyruvate = phosphonoacetaldehyde + L-alanine. In terms of biological role, involved in phosphonate degradation. In Lysinibacillus sphaericus (strain C3-41), this protein is 2-aminoethylphosphonate--pyruvate transaminase (phnW).